The following is a 163-amino-acid chain: ATP synthase subunit b', chloroplastic (163 aa).

Residues 26–46 (ATLPLMALQFILLTVILTFVF) traverse the membrane as a helical segment.

Belongs to the ATPase B chain family. In terms of assembly, F-type ATPases have 2 components, F(1) - the catalytic core - and F(0) - the membrane proton channel. F(1) has five subunits: alpha(3), beta(3), gamma(1), delta(1), epsilon(1). F(0) has four main subunits: a(1), b(1), b'(1) and c(10-14). The alpha and beta chains form an alternating ring which encloses part of the gamma chain. F(1) is attached to F(0) by a central stalk formed by the gamma and epsilon chains, while a peripheral stalk is formed by the delta, b and b' chains.

It localises to the plastid. The protein resides in the chloroplast thylakoid membrane. Functionally, f(1)F(0) ATP synthase produces ATP from ADP in the presence of a proton or sodium gradient. F-type ATPases consist of two structural domains, F(1) containing the extramembraneous catalytic core and F(0) containing the membrane proton channel, linked together by a central stalk and a peripheral stalk. During catalysis, ATP synthesis in the catalytic domain of F(1) is coupled via a rotary mechanism of the central stalk subunits to proton translocation. Component of the F(0) channel, it forms part of the peripheral stalk, linking F(1) to F(0). The b'-subunit is a diverged and duplicated form of b found in plants and photosynthetic bacteria. This Ochrosphaera neapolitana protein is ATP synthase subunit b', chloroplastic.